The chain runs to 37 residues: Large ribosomal subunit protein bL36 (37 aa).

The protein belongs to the bacterial ribosomal protein bL36 family.

This chain is Large ribosomal subunit protein bL36, found in Halothermothrix orenii (strain H 168 / OCM 544 / DSM 9562).